We begin with the raw amino-acid sequence, 412 residues long: Pentatricopeptide repeat-containing protein At3g60980, mitochondrial (412 aa).

The transit peptide at 1–18 (MSLIGRLNLGRRFCTAVP) directs the protein to the mitochondrion. PPR repeat units lie at residues 69-104 (TTTICQSIIGGMLRDKRLKDAYDLYEFFFNQHNLRP), 105-139 (NSHCWNYIIESGFQQGLVNDALHFHHRCINSGQVH), 143-178 (SDDSFRILTKGLVHSGRLDQAEAFLRGRTVNRTTYP), 179-213 (DHVAYNNLIRGFLDLGNFKKANLVLGEFKRLFLIA), 230-264 (VAFLMATFMEYWFKQGKQVEAMECYNRCVLSNRLL), 266-296 (CAETGNALLKVLLKYGEKKNAWALYHELLDK), 305-339 (DSDTIKIMVDECFDMGWFSEAMETYKKARPKNDYL), 344-371 (IITRFCENRMLSEAESVFVDSLADDFGY), and 373-407 (DVNTYKTMIDAYVKAGRIHDAIKTSNKMIDATLKE).

It belongs to the PPR family. P subfamily.

It is found in the mitochondrion. This is Pentatricopeptide repeat-containing protein At3g60980, mitochondrial from Arabidopsis thaliana (Mouse-ear cress).